Here is a 627-residue protein sequence, read N- to C-terminus: Mitochondrial Rho GTPase 1 (627 aa).

The region spanning 1 to 169 (MATVRICVCG…FFLCQKAVTH (169 aa)) is the Miro 1 domain. Residues 1 to 599 (MATVRICVCG…PRSNEEGPDR (599 aa)) are Cytoplasmic-facing. GTP is bound by residues 10 to 17 (GDESTGKS), 58 to 62 (DTSAR), and 114 to 117 (NKSD). EF-hand domains lie at 185-220 (LCIN…CFDK) and 305-340 (AGYR…APGL). Positions 198, 200, 202, 204, 209, 318, 320, 322, and 329 each coordinate Ca(2+). Residues 420–584 (RNVVLCYVLG…FVAYADAATT (165 aa)) enclose the Miro 2 domain. GTP-binding positions include 429-436 (GASGAGKS), 465-469 (ELPGG), and 534-537 (LKAD). Residues 600-620 (TSLYIALGATACAGVAALTIW) traverse the membrane as a helical; Anchor for type IV membrane protein segment. At 621 to 627 (RRATNAL) the chain is on the mitochondrial intermembrane side.

It belongs to the mitochondrial Rho GTPase family.

The protein resides in the mitochondrion outer membrane. Mitochondrial GTPase involved in mitochondrial trafficking. Probably involved in control of anterograde transport of mitochondria and their subcellular distribution. The protein is Mitochondrial Rho GTPase 1 (GEM1) of Gibberella zeae (strain ATCC MYA-4620 / CBS 123657 / FGSC 9075 / NRRL 31084 / PH-1) (Wheat head blight fungus).